A 183-amino-acid chain; its full sequence is Inosine/xanthosine triphosphatase (183 aa).

The protein belongs to the YjjX NTPase family. As to quaternary structure, homodimer. Mg(2+) is required as a cofactor. Mn(2+) serves as cofactor.

The enzyme catalyses XTP + H2O = XDP + phosphate + H(+). The catalysed reaction is ITP + H2O = IDP + phosphate + H(+). In terms of biological role, phosphatase that hydrolyzes non-canonical purine nucleotides such as XTP and ITP to their respective diphosphate derivatives. Probably excludes non-canonical purines from DNA/RNA precursor pool, thus preventing their incorporation into DNA/RNA and avoiding chromosomal lesions. The sequence is that of Inosine/xanthosine triphosphatase from Vibrio cholerae serotype O1 (strain ATCC 39315 / El Tor Inaba N16961).